The sequence spans 192 residues: Large ribosomal subunit protein bL25 (192 aa).

The protein belongs to the bacterial ribosomal protein bL25 family. CTC subfamily. As to quaternary structure, part of the 50S ribosomal subunit; part of the 5S rRNA/L5/L18/L25 subcomplex. Contacts the 5S rRNA. Binds to the 5S rRNA independently of L5 and L18.

Functionally, this is one of the proteins that binds to the 5S RNA in the ribosome where it forms part of the central protuberance. The polypeptide is Large ribosomal subunit protein bL25 (Solidesulfovibrio magneticus (strain ATCC 700980 / DSM 13731 / RS-1) (Desulfovibrio magneticus)).